A 152-amino-acid chain; its full sequence is MGLSTLEQKLTEIISAPVEALGYELVGIEFIRGRQSTLRIYIDSDDGITVDACADVSHQVSAVLDVEDPITVAYNLEVSSPGLERPMFTAEHYTRYLGEEVTLVLRMAMQNRRKWQGIIKAVDGEMITVTVDGKDEVFALSNIQKANLVPHF.

This sequence belongs to the RimP family.

It is found in the cytoplasm. Functionally, required for maturation of 30S ribosomal subunits. The chain is Ribosome maturation factor RimP from Yersinia enterocolitica serotype O:8 / biotype 1B (strain NCTC 13174 / 8081).